The sequence spans 753 residues: Inactive protein-tyrosine phosphatase egg-5 (753 aa).

Disordered stretches follow at residues 26–46 (TSLQ…STDN) and 77–116 (RKKV…YAAP). The segment covering 35–46 (NTDDSSADSTDN) has biased composition (low complexity). The span at 84–94 (AQKDRRSKERL) shows a compositional bias: basic and acidic residues. One can recognise a Tyrosine-protein phosphatase domain in the interval 408-661 (MERRFEILEN…IFVHRLVAFF (254 aa)).

Belongs to the protein-tyrosine phosphatase family. Part of a complex, consisting of pseudophosphatases egg-3, egg-4, egg-5 and kinase mbk-2; this complex is required for the oocyte-to-zygote transition. Interacts (via tyrosine-protein phosphatase domain) with kinase mbk-2 (via 'Tyr-619' and 'Tyr-621'); mbk-2 tyrosine phosphorylation enhances the interaction.

The protein resides in the cytoplasm. Its subcellular location is the cell cortex. Its function is as follows. Inactive phosphatase which acts redundantly with egg-4 in the oocyte-to-zygote transition. Required for polarized cortical actin cytoskeleton rearrangement in the oocyte before and after fertilization. Together with egg-4, required for the cortical localization of kinase mbk-2 in maturing oocyte until the end of meiosis I. Also required for kinase mbk-2, pseudophosphatase egg-3 and chitin synthase chs-1 localization to cytoplasmic foci after fertilization. In Caenorhabditis elegans, this protein is Inactive protein-tyrosine phosphatase egg-5.